Here is a 150-residue protein sequence, read N- to C-terminus: Transcriptional repressor NrdR (150 aa).

Residues 3 to 33 (CPFCGGESRVLESRPASDEEAVRRRRECLAC) fold into a zinc finger. Positions 48 to 138 (LIVVKKDGRR…VYREFKDLNE (91 aa)) constitute an ATP-cone domain.

Belongs to the NrdR family. It depends on Zn(2+) as a cofactor.

In terms of biological role, negatively regulates transcription of bacterial ribonucleotide reductase nrd genes and operons by binding to NrdR-boxes. The sequence is that of Transcriptional repressor NrdR from Symbiobacterium thermophilum (strain DSM 24528 / JCM 14929 / IAM 14863 / T).